A 186-amino-acid polypeptide reads, in one-letter code: Large ribosomal subunit protein uL22 (186 aa).

Basic and acidic residues-rich tracts occupy residues 157-167 (VSKATDDEPTK) and 177-186 (RQKEKMLRSE). Positions 157 to 186 (VSKATDDEPTKKKLSKKKLQRQKEKMLRSE) are disordered.

This sequence belongs to the universal ribosomal protein uL22 family.

This Drosophila yakuba (Fruit fly) protein is Large ribosomal subunit protein uL22 (RpL17).